Reading from the N-terminus, the 475-residue chain is U3 small nucleolar RNA-interacting protein 2 (475 aa).

The disordered stretch occupies residues 1 to 75; it reads MSATAAARKR…EEEEELEETA (75 aa). The Nuclear localization signal signature appears at 8–40; the sequence is RKRGKPASGAGAGAGAGKRRRKADSAGDRGKSK. Omega-N-methylarginine is present on Arg10. Residues Lys12 and Lys25 each carry the N6-acetyllysine modification. 4 positions are modified to phosphoserine: Ser50, Ser51, Ser53, and Ser57. Residues 65 to 74 are compositionally biased toward acidic residues; it reads EEEEEELEET. A Glycyl lysine isopeptide (Lys-Gly) (interchain with G-Cter in SUMO2) cross-link involves residue Lys113. WD repeat units follow at residues 144-183, 197-236, 239-278, 281-320, 322-360, 374-413, and 419-460; these read GHQL…KLHV, GHSS…HLYT, GHRD…YVET, GHQD…QLVF, GHQG…PLAL, EQPF…RQLD, and PLVG…NSVC.

It belongs to the WD repeat RRP9 family. Interacts specifically with the U3 small nucleolar RNA (U3 snoRNA). Binds a sub-fragment of the U3 snoRNA surrounding the B/C motif (3UBC). This association with the U3BC RNA is dependent on the binding of a protein called 15.5K to the box B/C motif. The association of the protein with the U3BC RNA was found to be also dependent on a conserved RNA structure that flanks the box B/C motif. Part of the small subunit (SSU) processome, composed of more than 70 proteins and the RNA chaperone small nucleolar RNA (snoRNA) U3. In terms of processing, acetylation at Lys-12 and Lys-25 by KAT2B/PCAF under stress impairs pre-rRNA processing. Deacetylation by SIRT7 enhances RRP9-binding to U3 snoRNA, which is a prerequisite for pre-rRNA processing.

The protein resides in the nucleus. It is found in the nucleolus. Its function is as follows. Component of a nucleolar small nuclear ribonucleoprotein particle (snoRNP) thought to participate in the processing and modification of pre-ribosomal RNA (pre-rRNA). Part of the small subunit (SSU) processome, first precursor of the small eukaryotic ribosomal subunit. During the assembly of the SSU processome in the nucleolus, many ribosome biogenesis factors, an RNA chaperone and ribosomal proteins associate with the nascent pre-rRNA and work in concert to generate RNA folding, modifications, rearrangements and cleavage as well as targeted degradation of pre-ribosomal RNA by the RNA exosome. The polypeptide is U3 small nucleolar RNA-interacting protein 2 (Homo sapiens (Human)).